A 470-amino-acid chain; its full sequence is 6-phospho-beta-galactosidase (470 aa).

D-galactose 6-phosphate contacts are provided by Q19, H116, N159, E160, and N297. The Proton donor role is filled by E160. Catalysis depends on E375, which acts as the Nucleophile. 4 residues coordinate D-galactose 6-phosphate: S430, W431, K437, and Y439.

The protein belongs to the glycosyl hydrolase 1 family.

It carries out the reaction a 6-phospho-beta-D-galactoside + H2O = D-galactose 6-phosphate + an alcohol. Its pathway is carbohydrate metabolism; lactose degradation; D-galactose 6-phosphate and beta-D-glucose from lactose 6-phosphate: step 1/1. This Staphylococcus aureus (strain Mu3 / ATCC 700698) protein is 6-phospho-beta-galactosidase.